Consider the following 133-residue polypeptide: Small ribosomal subunit protein uS8 (133 aa).

Belongs to the universal ribosomal protein uS8 family. As to quaternary structure, part of the 30S ribosomal subunit. Contacts proteins S5 and S12.

In terms of biological role, one of the primary rRNA binding proteins, it binds directly to 16S rRNA central domain where it helps coordinate assembly of the platform of the 30S subunit. This Synechococcus sp. (strain RCC307) protein is Small ribosomal subunit protein uS8.